Here is a 314-residue protein sequence, read N- to C-terminus: ADP-L-glycero-D-manno-heptose-6-epimerase (314 aa).

Residues 10–11 (MI), 31–32 (DH), K38, R53, 75–79 (EGACS), and N92 each bind NADP(+). Residue Y139 is the Proton acceptor of the active site. K143 contributes to the NADP(+) binding site. N174 provides a ligand contact to substrate. NADP(+) contacts are provided by V175 and K183. The active-site Proton acceptor is K183. Residues S185, H192, 206 to 209 (FAGS), R214, and Y277 each bind substrate.

This sequence belongs to the NAD(P)-dependent epimerase/dehydratase family. HldD subfamily. In terms of assembly, homopentamer. NADP(+) is required as a cofactor.

The catalysed reaction is ADP-D-glycero-beta-D-manno-heptose = ADP-L-glycero-beta-D-manno-heptose. The protein operates within nucleotide-sugar biosynthesis; ADP-L-glycero-beta-D-manno-heptose biosynthesis; ADP-L-glycero-beta-D-manno-heptose from D-glycero-beta-D-manno-heptose 7-phosphate: step 4/4. In terms of biological role, catalyzes the interconversion between ADP-D-glycero-beta-D-manno-heptose and ADP-L-glycero-beta-D-manno-heptose via an epimerization at carbon 6 of the heptose. The chain is ADP-L-glycero-D-manno-heptose-6-epimerase from Vibrio cholerae serotype O1 (strain ATCC 39541 / Classical Ogawa 395 / O395).